A 143-amino-acid chain; its full sequence is uncharacterized protein (143 aa).

Basic and acidic residues predominate over residues 1–14; the sequence is MPAAKKQIEEKPEV. Residues 1-25 are disordered; it reads MPAAKKQIEEKPEVEQDLGAPDFSD.

This is an uncharacterized protein from Pseudoalteromonas phage PM2 (Bacteriophage PM2).